The chain runs to 356 residues: Replication factor C subunit 3 (356 aa).

Lys-20 bears the N6-acetyllysine mark. Phosphoserine is present on Ser-125.

The protein belongs to the activator 1 small subunits family. In terms of assembly, subunit of the RFC complex, an heteropentameric complex consisting of a large subunit RFC1 and four small subunits RFC2, RFC3, RFC4 and RFC5; the RFC complex interacts with PCNA. Forms an heterotetrameric complex with RFC2, RFC4 and RFC5; this complex has ATPase activity but is not stimulated by PCNA. The heterotetramer of subunits RFC2, RFC3, RFC4 and RFC5 interacts with RAD17. Interacts with CNTD1; this interaction facilitates crossover formation.

It localises to the nucleus. In terms of biological role, subunit of the replication factor C (RFC) complex which acts during elongation of primed DNA templates by DNA polymerases delta and epsilon, and is necessary for ATP-dependent loading of proliferating cell nuclear antigen (PCNA) onto primed DNA. The protein is Replication factor C subunit 3 (RFC3) of Bos taurus (Bovine).